A 272-amino-acid polypeptide reads, in one-letter code: Merozoite surface protein 2 (272 aa).

An N-terminal signal peptide occupies residues 1 to 20; it reads MKVIKTLSIINFFIFVTFNI. N-linked (GlcNAc...) asparagine glycans are attached at residues Asn22 and Asn36. The tract at residues 44-198 is polymorphic region; the sequence is AESKPSTGAG…EQTESPELQS (155 aa). The interval 45 to 233 is disordered; that stretch reads ESKPSTGAGG…DSQKECTDGN (189 aa). A compositionally biased stretch (gly residues) spans 51–82; that stretch reads GAGGSAGGSAGGSAGGSAGGSAGGSAGSGDGN. 6 tandem repeats follow at residues 53–56, 57–60, 61–64, 65–68, 69–72, and 73–76. Positions 53-76 are 6 X 4 AA tandem repeats of G-G-S-A; sequence GGSAGGSAGGSAGGSAGGSAGGSA. Over residues 83–119 the composition is skewed to low complexity; the sequence is GADAEGSSSTPATTTTTKTTTTTTTTNDAEASTSTSS. Positions 122–137 are enriched in basic and acidic residues; the sequence is PNHKNAETNPKGKGEV. Composition is skewed to polar residues over residues 139-165 and 172-200; these read EPNQANKETQNNSNVQQDSQTKSNVPP and KSPTAQPEQAENSAPTAEQTESPELQSAP. N-linked (GlcNAc...) asparagine glycosylation is present at Asn149. N-linked (GlcNAc...) asparagine glycosylation is present at Asn221. A disulfide bond links Cys229 and Cys237. 2 N-linked (GlcNAc...) asparagine glycosylation sites follow: Asn245 and Asn246. Asn246 carries GPI-anchor amidated asparagine lipidation. Positions 247–272 are cleaved as a propeptide — removed in mature form; sequence SSNIASINKFVVLISATLVLSFAIFI.

It localises to the cell membrane. Functionally, may play a role in the merozoite attachment to the erythrocyte. The chain is Merozoite surface protein 2 from Plasmodium falciparum (isolate 3D7).